Reading from the N-terminus, the 292-residue chain is Probable endonuclease 4 (292 aa).

Positions 69, 109, 145, 179, 182, 216, 229, 231, and 261 each coordinate Zn(2+).

This sequence belongs to the AP endonuclease 2 family. Requires Zn(2+) as cofactor.

The catalysed reaction is Endonucleolytic cleavage to 5'-phosphooligonucleotide end-products.. In terms of biological role, endonuclease IV plays a role in DNA repair. It cleaves phosphodiester bonds at apurinic or apyrimidinic (AP) sites, generating a 3'-hydroxyl group and a 5'-terminal sugar phosphate. The chain is Probable endonuclease 4 from Desulfotalea psychrophila (strain LSv54 / DSM 12343).